Here is a 330-residue protein sequence, read N- to C-terminus: Probable aldo-keto reductase 6 (330 aa).

Tyr64 (proton donor) is an active-site residue. His132 lines the substrate pocket. 211–221 (SPLGRGFLGLP) serves as a coordination point for NADP(+).

This sequence belongs to the aldo/keto reductase family.

This Arabidopsis thaliana (Mouse-ear cress) protein is Probable aldo-keto reductase 6.